The primary structure comprises 433 residues: Probable exopolygalacturonase X (433 aa).

The first 21 residues, 1 to 21 (MKLTQATTLLLSLGLSLPVEG), serve as a signal peptide directing secretion. The interval 30–54 (VGPKPPFRPLPASTPRNKTCQVQSN) is disordered. Residues 43 to 54 (TPRNKTCQVQSN) are compositionally biased toward polar residues. Residues Asn-46, Asn-127, and Asn-197 are each glycosylated (N-linked (GlcNAc...) asparagine). Residues 229-250 (SSNIVIQNSVINNGDDCVSFKP) form a PbH1 1 repeat. The Proton donor role is filled by Asp-243. Cys-245 and Cys-262 are oxidised to a cystine. 2 N-linked (GlcNAc...) asparagine glycosylation sites follow: Asn-251 and Asn-263. Residues 252-272 (STEILVQNLHCNGSHGISVGS) form a PbH1 2 repeat. His-266 is a catalytic residue. Residues Asn-290, Asn-295, Asn-327, Asn-352, and Asn-362 are each glycosylated (N-linked (GlcNAc...) asparagine). A PbH1 3 repeat occupies 325–346 (VQNITYDKMYIENVDWAIEVTQ). The stretch at 360–403 (PSNLTISDVYFNDLTGVTSGKNDPNVGTIICSSPDVCSGIHATN) is one PbH1 4 repeat. Cys-390 and Cys-396 form a disulfide bridge.

The protein belongs to the glycosyl hydrolase 28 family.

It is found in the secreted. The catalysed reaction is [(1-&gt;4)-alpha-D-galacturonosyl](n) + H2O = alpha-D-galacturonate + [(1-&gt;4)-alpha-D-galacturonosyl](n-1). Functionally, specific in hydrolyzing the terminal glycosidic bond of polygalacturonic acid and oligogalacturonates. The polypeptide is Probable exopolygalacturonase X (pgaX) (Aspergillus flavus (strain ATCC 200026 / FGSC A1120 / IAM 13836 / NRRL 3357 / JCM 12722 / SRRC 167)).